Reading from the N-terminus, the 212-residue chain is Leucine efflux protein (212 aa).

Transmembrane regions (helical) follow at residues 12 to 32 (TYLV…LFVL), 49 to 69 (GVFI…ATLI), 71 to 91 (TTPI…LYLG), 122 to 142 (ILSL…VQFI), 153 to 173 (FFIL…FLII), and 188 to 208 (LAKV…ARLA).

This sequence belongs to the Rht family.

It is found in the cell inner membrane. The enzyme catalyses L-leucine(in) + H(+)(out) = L-leucine(out) + H(+)(in). Functionally, exporter of leucine. This Escherichia coli O6:K15:H31 (strain 536 / UPEC) protein is Leucine efflux protein (leuE).